We begin with the raw amino-acid sequence, 496 residues long: Probable histidine ammonia-lyase (496 aa).

The segment at residues 141–143 is a cross-link (5-imidazolinone (Ala-Gly)); sequence ASG. Position 142 is a 2,3-didehydroalanine (Ser) (Ser142).

Belongs to the PAL/histidase family. Contains an active site 4-methylidene-imidazol-5-one (MIO), which is formed autocatalytically by cyclization and dehydration of residues Ala-Ser-Gly.

It localises to the cytoplasm. It carries out the reaction L-histidine = trans-urocanate + NH4(+). It functions in the pathway amino-acid degradation; L-histidine degradation into L-glutamate; N-formimidoyl-L-glutamate from L-histidine: step 1/3. The sequence is that of Probable histidine ammonia-lyase from Thermoplasma acidophilum (strain ATCC 25905 / DSM 1728 / JCM 9062 / NBRC 15155 / AMRC-C165).